We begin with the raw amino-acid sequence, 471 residues long: Citrate synthase, mitochondrial (471 aa).

Residues histidine 309, histidine 355, and aspartate 409 contribute to the active site.

Belongs to the citrate synthase family. In terms of assembly, homodimer. Ubiquitous.

The protein localises to the mitochondrion matrix. The enzyme catalyses oxaloacetate + acetyl-CoA + H2O = citrate + CoA + H(+). Its pathway is carbohydrate metabolism; tricarboxylic acid cycle; isocitrate from oxaloacetate: step 1/2. This Solanum tuberosum (Potato) protein is Citrate synthase, mitochondrial.